A 439-amino-acid polypeptide reads, in one-letter code: D-inositol 3-phosphate glycosyltransferase (439 aa).

Position 21 (H21) interacts with 1D-myo-inositol 3-phosphate. Residues 27 to 28 and G35 contribute to the UDP-N-acetyl-alpha-D-glucosamine site; that span reads QP. 1D-myo-inositol 3-phosphate is bound by residues 32–37, K90, Y123, T147, and R167; that span reads DAGGMN. Residues R241, K246, and Q299 each coordinate UDP-N-acetyl-alpha-D-glucosamine. The Mg(2+) site is built by Y308, R309, and A311. 2 residues coordinate UDP-N-acetyl-alpha-D-glucosamine: E321 and E329. T335 contacts Mg(2+).

Belongs to the glycosyltransferase group 1 family. MshA subfamily. Homodimer.

It catalyses the reaction 1D-myo-inositol 3-phosphate + UDP-N-acetyl-alpha-D-glucosamine = 1D-myo-inositol 2-acetamido-2-deoxy-alpha-D-glucopyranoside 3-phosphate + UDP + H(+). Its function is as follows. Catalyzes the transfer of a N-acetyl-glucosamine moiety to 1D-myo-inositol 3-phosphate to produce 1D-myo-inositol 2-acetamido-2-deoxy-glucopyranoside 3-phosphate in the mycothiol biosynthesis pathway. This chain is D-inositol 3-phosphate glycosyltransferase, found in Mycobacterium sp. (strain JLS).